The sequence spans 150 residues: Large ribosomal subunit protein bL9 (150 aa).

Belongs to the bacterial ribosomal protein bL9 family.

Binds to the 23S rRNA. The sequence is that of Large ribosomal subunit protein bL9 from Wigglesworthia glossinidia brevipalpis.